The following is a 410-amino-acid chain: Elongation factor Tu, chloroplastic (410 aa).

Residues 10–215 form the tr-type G domain; that stretch reads KPHVNIGTIG…NVDSYIPTPE (206 aa). A G1 region spans residues 19 to 26; that stretch reads GHVDHGKT. Residue 19–26 participates in GTP binding; the sequence is GHVDHGKT. Residue T26 participates in Mg(2+) binding. Residues 61 to 65 are G2; the sequence is GITIN. The interval 82–85 is G3; sequence DCPG. GTP contacts are provided by residues 82-86 and 137-140; these read DCPGH and NKKD. The G4 stretch occupies residues 137–140; sequence NKKD. A G5 region spans residues 175-177; the sequence is SAL.

It belongs to the TRAFAC class translation factor GTPase superfamily. Classic translation factor GTPase family. EF-Tu/EF-1A subfamily.

It is found in the plastid. The protein resides in the chloroplast. The catalysed reaction is GTP + H2O = GDP + phosphate + H(+). Functionally, GTP hydrolase that promotes the GTP-dependent binding of aminoacyl-tRNA to the A-site of ribosomes during protein biosynthesis. In Oltmannsiellopsis viridis (Marine flagellate), this protein is Elongation factor Tu, chloroplastic (tufA).